Reading from the N-terminus, the 516-residue chain is Bifunctional pantoate ligase/cytidylate kinase (516 aa).

A pantoate--beta-alanine ligase region spans residues 1–279; the sequence is MVRKIFQTNA…CGSTRLIDHT (279 aa). 29–36 is a binding site for ATP; the sequence is MGGLHPGH. The active-site Proton donor is the His-36. Gln-64 provides a ligand contact to (R)-pantoate. Beta-alanine is bound at residue Gln-64. An ATP-binding site is contributed by 153–156; that stretch reads GEKD. Gln-159 serves as a coordination point for (R)-pantoate. 190-193 serves as a coordination point for ATP; the sequence is YSSR. The tract at residues 280-516 is cytidylate kinase; sequence FLMHRKPIIA…PEEVWPTPNS (237 aa).

The protein in the N-terminal section; belongs to the pantothenate synthetase family. It in the C-terminal section; belongs to the cytidylate kinase family. Type 1 subfamily.

It localises to the cytoplasm. The enzyme catalyses (R)-pantoate + beta-alanine + ATP = (R)-pantothenate + AMP + diphosphate + H(+). It carries out the reaction CMP + ATP = CDP + ADP. The catalysed reaction is dCMP + ATP = dCDP + ADP. It participates in cofactor biosynthesis; (R)-pantothenate biosynthesis; (R)-pantothenate from (R)-pantoate and beta-alanine: step 1/1. Catalyzes the condensation of pantoate with beta-alanine in an ATP-dependent reaction via a pantoyl-adenylate intermediate. Its function is as follows. Catalyzes the transfer of a phosphate group from ATP to either CMP or dCMP to form CDP or dCDP and ADP, respectively. The chain is Bifunctional pantoate ligase/cytidylate kinase from Prochlorococcus marinus (strain NATL1A).